Here is a 267-residue protein sequence, read N- to C-terminus: 3-methyl-2-oxobutanoate hydroxymethyltransferase (267 aa).

Residues Asp45 and Asp84 each contribute to the Mg(2+) site. 3-methyl-2-oxobutanoate-binding positions include 45–46, Asp84, and Lys113; that span reads DS. Position 115 (Glu115) interacts with Mg(2+). Residue Glu182 is the Proton acceptor of the active site.

The protein belongs to the PanB family. As to quaternary structure, homodecamer; pentamer of dimers. Requires Mg(2+) as cofactor.

The protein resides in the cytoplasm. It carries out the reaction 3-methyl-2-oxobutanoate + (6R)-5,10-methylene-5,6,7,8-tetrahydrofolate + H2O = 2-dehydropantoate + (6S)-5,6,7,8-tetrahydrofolate. It participates in cofactor biosynthesis; coenzyme A biosynthesis. Its function is as follows. Catalyzes the reversible reaction in which hydroxymethyl group from 5,10-methylenetetrahydrofolate is transferred onto alpha-ketoisovalerate to form ketopantoate. The sequence is that of 3-methyl-2-oxobutanoate hydroxymethyltransferase from Saccharolobus islandicus (strain M.16.27) (Sulfolobus islandicus).